The chain runs to 387 residues: S-adenosylmethionine synthase (387 aa).

Histidine 15 contacts ATP. Aspartate 17 lines the Mg(2+) pocket. Residue glutamate 43 coordinates K(+). L-methionine contacts are provided by glutamate 56 and glutamine 99. A flexible loop region spans residues 99 to 109; sequence QSPDIAQGVNN. Residues 166 to 168, 232 to 233, aspartate 241, 247 to 248, alanine 264, and lysine 268 contribute to the ATP site; these read DAK, RF, and RK. Aspartate 241 serves as a coordination point for L-methionine. Lysine 272 contacts L-methionine.

The protein belongs to the AdoMet synthase family. In terms of assembly, homotetramer; dimer of dimers. It depends on Mg(2+) as a cofactor. Requires K(+) as cofactor.

The protein resides in the cytoplasm. It catalyses the reaction L-methionine + ATP + H2O = S-adenosyl-L-methionine + phosphate + diphosphate. It participates in amino-acid biosynthesis; S-adenosyl-L-methionine biosynthesis; S-adenosyl-L-methionine from L-methionine: step 1/1. Catalyzes the formation of S-adenosylmethionine (AdoMet) from methionine and ATP. The overall synthetic reaction is composed of two sequential steps, AdoMet formation and the subsequent tripolyphosphate hydrolysis which occurs prior to release of AdoMet from the enzyme. This is S-adenosylmethionine synthase from Methylobacillus flagellatus (strain ATCC 51484 / DSM 6875 / VKM B-1610 / KT).